Here is a 379-residue protein sequence, read N- to C-terminus: tRNA 2-selenouridine synthase (379 aa).

Residues 17–140 (FLSGAPLLDT…MRRFLIESLE (124 aa)) form the Rhodanese domain. The active-site S-selanylcysteine intermediate is the C100.

The protein belongs to the SelU family. As to quaternary structure, monomer.

The catalysed reaction is 5-methylaminomethyl-2-thiouridine(34) in tRNA + selenophosphate + (2E)-geranyl diphosphate + H2O + H(+) = 5-methylaminomethyl-2-selenouridine(34) in tRNA + (2E)-thiogeraniol + phosphate + diphosphate. It catalyses the reaction 5-methylaminomethyl-2-thiouridine(34) in tRNA + (2E)-geranyl diphosphate = 5-methylaminomethyl-S-(2E)-geranyl-thiouridine(34) in tRNA + diphosphate. It carries out the reaction 5-methylaminomethyl-S-(2E)-geranyl-thiouridine(34) in tRNA + selenophosphate + H(+) = 5-methylaminomethyl-2-(Se-phospho)selenouridine(34) in tRNA + (2E)-thiogeraniol. The enzyme catalyses 5-methylaminomethyl-2-(Se-phospho)selenouridine(34) in tRNA + H2O = 5-methylaminomethyl-2-selenouridine(34) in tRNA + phosphate. Functionally, involved in the post-transcriptional modification of the uridine at the wobble position (U34) of tRNA(Lys), tRNA(Glu) and tRNA(Gln). Catalyzes the conversion of 2-thiouridine (S2U-RNA) to 2-selenouridine (Se2U-RNA). Acts in a two-step process involving geranylation of 2-thiouridine (S2U) to S-geranyl-2-thiouridine (geS2U) and subsequent selenation of the latter derivative to 2-selenouridine (Se2U) in the tRNA chain. The protein is tRNA 2-selenouridine synthase of Hahella chejuensis (strain KCTC 2396).